Here is a 911-residue protein sequence, read N- to C-terminus: FIGNL1-interacting regulator of recombination and mitosis (911 aa).

Residues 830 to 853 (SEKSQPAQTPLTEEPCAKRARQET) form a disordered region. The segment covering 844 to 853 (PCAKRARQET) has biased composition (basic and acidic residues).

The protein resides in the chromosome. Its subcellular location is the centromere. It localises to the kinetochore. The protein localises to the nucleus. It is found in the midbody. The protein resides in the cytoplasm. Its subcellular location is the cytoskeleton. It localises to the spindle. Its function is as follows. May play a role in chromosome segregation. This Danio rerio (Zebrafish) protein is FIGNL1-interacting regulator of recombination and mitosis.